Reading from the N-terminus, the 95-residue chain is Aspartyl/glutamyl-tRNA(Asn/Gln) amidotransferase subunit C (95 aa).

A compositionally biased stretch (basic and acidic residues) spans 55 to 67; the sequence is ALERRNVTREDQV. The segment at 55–83 is disordered; that stretch reads ALERRNVTREDQVHNSLTNDKALENAPET.

This sequence belongs to the GatC family. As to quaternary structure, heterotrimer of A, B and C subunits.

The catalysed reaction is L-glutamyl-tRNA(Gln) + L-glutamine + ATP + H2O = L-glutaminyl-tRNA(Gln) + L-glutamate + ADP + phosphate + H(+). The enzyme catalyses L-aspartyl-tRNA(Asn) + L-glutamine + ATP + H2O = L-asparaginyl-tRNA(Asn) + L-glutamate + ADP + phosphate + 2 H(+). Its function is as follows. Allows the formation of correctly charged Asn-tRNA(Asn) or Gln-tRNA(Gln) through the transamidation of misacylated Asp-tRNA(Asn) or Glu-tRNA(Gln) in organisms which lack either or both of asparaginyl-tRNA or glutaminyl-tRNA synthetases. The reaction takes place in the presence of glutamine and ATP through an activated phospho-Asp-tRNA(Asn) or phospho-Glu-tRNA(Gln). The chain is Aspartyl/glutamyl-tRNA(Asn/Gln) amidotransferase subunit C from Natranaerobius thermophilus (strain ATCC BAA-1301 / DSM 18059 / JW/NM-WN-LF).